The chain runs to 330 residues: Ferrochelatase (330 aa).

Fe cation contacts are provided by histidine 200 and glutamate 281.

This sequence belongs to the ferrochelatase family.

The protein localises to the cytoplasm. It carries out the reaction heme b + 2 H(+) = protoporphyrin IX + Fe(2+). Its pathway is porphyrin-containing compound metabolism; protoheme biosynthesis; protoheme from protoporphyrin-IX: step 1/1. Catalyzes the ferrous insertion into protoporphyrin IX. This Marinomonas sp. (strain MWYL1) protein is Ferrochelatase.